Here is a 399-residue protein sequence, read N- to C-terminus: Acetate kinase (399 aa).

Asparagine 8 contacts Mg(2+). Lysine 15 serves as a coordination point for ATP. Arginine 89 is a binding site for substrate. Catalysis depends on aspartate 147, which acts as the Proton donor/acceptor. ATP-binding positions include histidine 207 to glycine 211, aspartate 284 to arginine 286, and glycine 332 to asparagine 336. Glutamate 385 is a binding site for Mg(2+).

It belongs to the acetokinase family. Homodimer. It depends on Mg(2+) as a cofactor. Requires Mn(2+) as cofactor.

The protein localises to the cytoplasm. The catalysed reaction is acetate + ATP = acetyl phosphate + ADP. Its pathway is metabolic intermediate biosynthesis; acetyl-CoA biosynthesis; acetyl-CoA from acetate: step 1/2. Functionally, catalyzes the formation of acetyl phosphate from acetate and ATP. Can also catalyze the reverse reaction. In Streptococcus mutans serotype c (strain ATCC 700610 / UA159), this protein is Acetate kinase.